The chain runs to 427 residues: Putative F-box/FBD/LRR-repeat protein At4g13965 (427 aa).

Residues 13 to 61 enclose the F-box domain; that stretch reads ADRISQLPEALIIQILSLLPTEVAVTTSVLSKQWQFLWKMLPKLNFDSL. LRR repeat units follow at residues 67-93, 98-122, 141-168, 169-194, 213-241, and 258-284; these read FKTF…HLIV, CNSM…VLEV, TLEL…HLHY, VDFK…VVHR, LTIY…KIVG, and SMIV…FLEF. One can recognise an FBD domain in the interval 346–396; the sequence is KWNKPKIVPECLLFHLETFMWKGYEWKRNDETEVAKYILSNTNRLKRATFF.

The polypeptide is Putative F-box/FBD/LRR-repeat protein At4g13965 (Arabidopsis thaliana (Mouse-ear cress)).